Here is a 455-residue protein sequence, read N- to C-terminus: CDP-diacylglycerol--serine O-phosphatidyltransferase (455 aa).

2 PLD phosphodiesterase domains span residues 134-160 (VFGV…NNVY) and 356-383 (GDNT…NPRA).

It belongs to the CDP-alcohol phosphatidyltransferase class-II family. In terms of assembly, multimeric.

The protein resides in the cytoplasm. Its subcellular location is the cell inner membrane. The catalysed reaction is a CDP-1,2-diacyl-sn-glycerol + L-serine = a 1,2-diacyl-sn-glycero-3-phospho-L-serine + CMP + H(+). The protein is CDP-diacylglycerol--serine O-phosphatidyltransferase (pssA) of Haemophilus influenzae (strain ATCC 51907 / DSM 11121 / KW20 / Rd).